The sequence spans 268 residues: Thiazole synthase (268 aa).

Lys100 functions as the Schiff-base intermediate with DXP in the catalytic mechanism. 1-deoxy-D-xylulose 5-phosphate contacts are provided by residues Gly161, 187–188 (AG), and 209–210 (NT). The interval 248-268 (ASPSSPAEGMFTGTQHPAANS) is disordered. Residues 259 to 268 (TGTQHPAANS) show a composition bias toward polar residues.

Belongs to the ThiG family. In terms of assembly, homotetramer. Forms heterodimers with either ThiH or ThiS.

The protein resides in the cytoplasm. It carries out the reaction [ThiS sulfur-carrier protein]-C-terminal-Gly-aminoethanethioate + 2-iminoacetate + 1-deoxy-D-xylulose 5-phosphate = [ThiS sulfur-carrier protein]-C-terminal Gly-Gly + 2-[(2R,5Z)-2-carboxy-4-methylthiazol-5(2H)-ylidene]ethyl phosphate + 2 H2O + H(+). It functions in the pathway cofactor biosynthesis; thiamine diphosphate biosynthesis. Catalyzes the rearrangement of 1-deoxy-D-xylulose 5-phosphate (DXP) to produce the thiazole phosphate moiety of thiamine. Sulfur is provided by the thiocarboxylate moiety of the carrier protein ThiS. In vitro, sulfur can be provided by H(2)S. This Nitrosomonas europaea (strain ATCC 19718 / CIP 103999 / KCTC 2705 / NBRC 14298) protein is Thiazole synthase.